The primary structure comprises 1482 residues: Cystic fibrosis transmembrane conductance regulator (1482 aa).

The Cytoplasmic portion of the chain corresponds to 1-77; that stretch reads MQRSPLEKAS…KLINALQRCF (77 aa). Residues 78–98 form a helical membrane-spanning segment; that stretch reads FWRFTFYGILLYLGEVTKAIQ. The region spanning 81-365 is the ABC transmembrane type-1 1 domain; that stretch reads FTFYGILLYL…WAVQTWYDSL (285 aa). Residues 99–122 are Extracellular-facing; the sequence is PLLLGRIIASYDPDNKMERSIAIY. The helical transmembrane segment at 123–146 threads the bilayer; it reads LGIGLCLLFIMRTLLLHPAIFGLH. Over 147–195 the chain is Cytoplasmic; the sequence is HIGMQMRIALFSLIYKKTLKLSSRVLDKISIGQLVSLLSNNLNKFDEGL. A helical membrane pass occupies residues 196–216; that stretch reads ALAHFVWIAPLQVMLLMGLLW. The Extracellular segment spans residues 217-222; the sequence is ELLQAS. A helical transmembrane segment spans residues 223–243; it reads AFCGLAFLIVLALLQAGLGRM. Residues 244–298 lie on the Cytoplasmic side of the membrane; the sequence is MMKYRDQRAGKINERLVITSEMIENIQSVKAYCWEEAMEKMIENLRQTELRLTRK. Residues 299 to 319 traverse the membrane as a helical segment; sequence AAYVRYVNSSAFFFSGFFVVF. Residues 320-339 are Extracellular-facing; that stretch reads LSVLPYALIKGIILRKIFTT. Residues 340–358 traverse the membrane as a helical segment; sequence ISFCIVLRMAVTRQFPWAV. The Cytoplasmic portion of the chain corresponds to 359–859; the sequence is QTWYDSLGAI…YLRYITVHKN (501 aa). ATP-binding positions include Trp401, 458–465, and Gln493; that span reads GSTGAGKT. The 224-residue stretch at 423-646 folds into the ABC transporter 1 domain; the sequence is SGDNRLFFSN…RPDFSSKLMG (224 aa). Cys524 is lipidated: S-palmitoyl cysteine. Ser549 and Ser660 each carry phosphoserine. The tract at residues 654 to 832 is disordered R region; the sequence is SAERRNSILT…EEINEEDLKE (179 aa). A Phosphoserine; by PKA modification is found at Ser670. The residue at position 686 (Ser686) is a Phosphoserine. Residue Lys688 forms a Glycyl lysine isopeptide (Lys-Gly) (interchain with G-Cter in ubiquitin) linkage. 2 positions are modified to phosphoserine: Ser700 and Ser712. Thr717 bears the Phosphothreonine mark. Phosphoserine occurs at positions 737, 768, 791, 796, and 814. The helical transmembrane segment at 860–880 threads the bilayer; sequence LIFVLIWCLVIFLAEVAASLV. In terms of domain architecture, ABC transmembrane type-1 2 spans 860-1156; it reads LIFVLIWCLV…AVNSSIDVDS (297 aa). Residues 881 to 919 lie on the Extracellular side of the membrane; that stretch reads AFWLIEKTRPQDKGNSTRSTNNTSPVIITSTSAFYMFYI. N-linked (GlcNAc...) asparagine glycans are attached at residues Asn895 and Asn901. A discontinuously helical transmembrane segment spans residues 920 to 940; it reads YVGVADSLLALGFLRGLPLVH. The Cytoplasmic portion of the chain corresponds to 941 to 991; sequence TLITVSKILHQKMLHSVLHAPMSTLNTLKAGAILNRFSKDIAILDDLLPLT. The chain crosses the membrane as a helical span at residues 992 to 1012; that stretch reads IFDFIQLVLIVIGAVVVVSIL. The Extracellular segment spans residues 1013-1014; it reads KP. Residues 1015–1035 form a helical membrane-spanning segment; it reads YIFLAAVPVIIAFVILRAYFL. Topologically, residues 1036 to 1096 are cytoplasmic; sequence QTSQQLKQLE…TATWFLYLST (61 aa). A helical membrane pass occupies residues 1097–1117; the sequence is LRWFQMRIEMIFVVFFVAVTF. At 1118–1131 the chain is on the extracellular side; sequence ISILTTGEGEGTVG. The chain crosses the membrane as a helical span at residues 1132–1152; sequence IILTLAMNIMSTLQWAVNSSI. At 1153–1482 the chain is on the cytoplasmic side; sequence DVDSLMRSVS…AEEEVQDTRL (330 aa). The region spanning 1212 to 1445 is the ABC transporter 2 domain; sequence ITVKDLTAKY…KSLFQQAISP (234 aa). Residues Tyr1221 and 1246–1253 contribute to the ATP site; that span reads GRTGSGKS. Residues 1388–1482 form an interaction with GORASP2 region; it reads RALKQAFADC…AEEEVQDTRL (95 aa). Residue Cys1397 is the site of S-palmitoyl cysteine attachment. Phosphoserine occurs at positions 1446 and 1458. The interval 1454–1482 is disordered; it reads QRSSSKHRSRAQITALKEEAEEEVQDTRL. The segment covering 1472–1482 has biased composition (acidic residues); it reads EAEEEVQDTRL. Positions 1480 to 1482 match the PDZ-binding motif; it reads TRL.

It belongs to the ABC transporter superfamily. ABCC family. CFTR transporter (TC 3.A.1.202) subfamily. Monomer; does not require oligomerization for channel activity. May form oligomers in the membrane. Interacts with SLC26A3, SLC26A6 and NHERF1. Interacts with SHANK2. Interacts with MYO6. Interacts (via C-terminus) with GOPC (via PDZ domain); this promotes CFTR internalization and thereby decreases channel activity. Interacts with SLC4A7 through NHERF1. Found in a complex with MYO5B and RAB11A. Interacts with ANO1. Interacts with SLC26A8. Interacts with AHCYL1; the interaction increases CFTR activity. Interacts with CSE1L. The core-glycosylated form interacts with GORASP2 (via PDZ GRASP-type 1 domain) in respone to ER stress. Interacts with MARCHF2; the interaction leads to CFTR ubiqtuitination and degradation. Interacts with ADGRG2. Post-translationally, N-glycosylated. Phosphorylated; cAMP treatment promotes phosphorylation and activates the channel. Dephosphorylation decreases the ATPase activity (in vitro). Phosphorylation at PKA sites activates the channel. Phosphorylation at PKC sites enhances the response to phosphorylation by PKA. Phosphorylated by AMPK; this inhibits channel activity. In terms of processing, ubiquitinated, leading to its degradation in the lysosome. Deubiquitination by USP10 in early endosomes enhances its endocytic recycling to the cell membrane. Ubiquitinated by RNF185 during ER stress. Ubiquitinated by MARCHF2.

It is found in the apical cell membrane. It localises to the early endosome membrane. The protein localises to the cell membrane. The protein resides in the recycling endosome membrane. Its subcellular location is the endoplasmic reticulum membrane. It is found in the nucleus. The catalysed reaction is ATP + H2O + closed Cl(-) channel = ADP + phosphate + open Cl(-) channel.. The enzyme catalyses chloride(in) = chloride(out). It catalyses the reaction hydrogencarbonate(in) = hydrogencarbonate(out). It carries out the reaction ATP + H2O = ADP + phosphate + H(+). Functionally, epithelial ion channel that plays an important role in the regulation of epithelial ion and water transport and fluid homeostasis. Mediates the transport of chloride ions across the cell membrane. Possesses an intrinsic ATPase activity and utilizes ATP to gate its channel; the passive flow of anions through the channel is gated by cycles of ATP binding and hydrolysis by the ATP-binding domains. The ion channel is also permeable to HCO(3)(-); selectivity depends on the extracellular chloride concentration. Exerts its function also by modulating the activity of other ion channels and transporters. Contributes to the regulation of the pH and the ion content of the epithelial fluid layer. Modulates the activity of the epithelial sodium channel (ENaC) complex, in part by regulating the cell surface expression of the ENaC complex. May regulate bicarbonate secretion and salvage in epithelial cells by regulating the transporter SLC4A7. Can inhibit the chloride channel activity of ANO1. Plays a role in the chloride and bicarbonate homeostasis during sperm epididymal maturation and capacitation. The protein is Cystic fibrosis transmembrane conductance regulator of Rhinolophus ferrumequinum (Greater horseshoe bat).